The sequence spans 157 residues: NADPH-dependent 7-cyano-7-deazaguanine reductase (157 aa).

Catalysis depends on Cys55, which acts as the Thioimide intermediate. Asp62 functions as the Proton donor in the catalytic mechanism. Residues 77–79 and 96–97 each bind substrate; these read VES and HE.

The protein belongs to the GTP cyclohydrolase I family. QueF type 1 subfamily.

The protein localises to the cytoplasm. The catalysed reaction is 7-aminomethyl-7-carbaguanine + 2 NADP(+) = 7-cyano-7-deazaguanine + 2 NADPH + 3 H(+). The protein operates within tRNA modification; tRNA-queuosine biosynthesis. Functionally, catalyzes the NADPH-dependent reduction of 7-cyano-7-deazaguanine (preQ0) to 7-aminomethyl-7-deazaguanine (preQ1). This is NADPH-dependent 7-cyano-7-deazaguanine reductase from Neisseria meningitidis serogroup A / serotype 4A (strain DSM 15465 / Z2491).